The chain runs to 546 residues: Chaperonin GroEL 1 (546 aa).

ATP is bound by residues 30–33 (TLGP), Lys51, 87–91 (DGTTT), Gly415, 479–481 (NAA), and Asp495. The interval 526–546 (KEDAPMPGGMPGGMGGMGMDM) is disordered. Over residues 534 to 546 (GMPGGMGGMGMDM) the composition is skewed to gly residues.

Belongs to the chaperonin (HSP60) family. As to quaternary structure, forms a cylinder of 14 subunits composed of two heptameric rings stacked back-to-back. Interacts with the co-chaperonin GroES.

It is found in the cytoplasm. The catalysed reaction is ATP + H2O + a folded polypeptide = ADP + phosphate + an unfolded polypeptide.. Functionally, together with its co-chaperonin GroES, plays an essential role in assisting protein folding. The GroEL-GroES system forms a nano-cage that allows encapsulation of the non-native substrate proteins and provides a physical environment optimized to promote and accelerate protein folding. The polypeptide is Chaperonin GroEL 1 (Burkholderia pseudomallei (strain 1106a)).